The chain runs to 259 residues: Protoheme IX farnesyltransferase (259 aa).

8 consecutive transmembrane segments (helical) span residues 15–35 (LICL…NGVL), 61–81 (ATVA…TFLP), 83–103 (LTTA…TLWF), 109–129 (WGVV…ASAV), 137–157 (PLIL…ALAL), 182–202 (VCIF…WFTG), 208–228 (FAIE…LYLV), and 236–256 (AFQA…IDIC).

It belongs to the UbiA prenyltransferase family. Protoheme IX farnesyltransferase subfamily.

The protein localises to the cell inner membrane. The catalysed reaction is heme b + (2E,6E)-farnesyl diphosphate + H2O = Fe(II)-heme o + diphosphate. It participates in porphyrin-containing compound metabolism; heme O biosynthesis; heme O from protoheme: step 1/1. Functionally, converts heme B (protoheme IX) to heme O by substitution of the vinyl group on carbon 2 of heme B porphyrin ring with a hydroxyethyl farnesyl side group. This is Protoheme IX farnesyltransferase from Geotalea uraniireducens (strain Rf4) (Geobacter uraniireducens).